A 505-amino-acid chain; its full sequence is Acetylcholine receptor subunit beta (505 aa).

The first 24 residues, Met-1–Gly-24, serve as a signal peptide directing secretion. Topologically, residues Ser-25 to Lys-245 are extracellular. The cysteines at positions 152 and 166 are disulfide-linked. Asn-165 carries an N-linked (GlcNAc...) asparagine glycan. The next 3 helical transmembrane spans lie at Pro-246–Leu-270, Met-278–Leu-295, and Tyr-312–Leu-333. The Cytoplasmic segment spans residues His-334 to Arg-473. Residues Lys-365–Thr-391 form a disordered region. Position 394 is a phosphotyrosine; by Tyr-kinases (Tyr-394). A helical transmembrane segment spans residues Leu-474 to Leu-492.

The protein belongs to the ligand-gated ion channel (TC 1.A.9) family. Acetylcholine receptor (TC 1.A.9.1) subfamily. Beta-1/CHRNB1 sub-subfamily. As to quaternary structure, pentamer of two alpha chains, and one each of the beta, delta, and gamma (in immature muscle) or epsilon (in mature muscle) chains. The muscle heteropentamer composed of alpha-1, beta-1, delta, epsilon subunits interacts with the alpha-conotoxin ImII.

It is found in the postsynaptic cell membrane. The protein resides in the cell membrane. It carries out the reaction K(+)(in) = K(+)(out). The enzyme catalyses Na(+)(in) = Na(+)(out). In terms of biological role, after binding acetylcholine, the AChR responds by an extensive change in conformation that affects all subunits and leads to opening of an ion-conducting channel across the plasma membrane. This chain is Acetylcholine receptor subunit beta (CHRNB1), found in Bos taurus (Bovine).